Consider the following 303-residue polypeptide: Ornithine carbamoyltransferase (303 aa).

Residues 53 to 56 (STRT), glutamine 80, arginine 104, and 131 to 134 (HPCQ) contribute to the carbamoyl phosphate site. L-ornithine is bound by residues asparagine 162, aspartate 222, and 226-227 (SM). Residues 261–262 (CL) and arginine 289 each bind carbamoyl phosphate.

Belongs to the aspartate/ornithine carbamoyltransferase superfamily. OTCase family.

The protein localises to the cytoplasm. It catalyses the reaction carbamoyl phosphate + L-ornithine = L-citrulline + phosphate + H(+). The protein operates within amino-acid biosynthesis; L-arginine biosynthesis; L-arginine from L-ornithine and carbamoyl phosphate: step 1/3. In terms of biological role, reversibly catalyzes the transfer of the carbamoyl group from carbamoyl phosphate (CP) to the N(epsilon) atom of ornithine (ORN) to produce L-citrulline. The sequence is that of Ornithine carbamoyltransferase from Mesorhizobium japonicum (strain LMG 29417 / CECT 9101 / MAFF 303099) (Mesorhizobium loti (strain MAFF 303099)).